Here is a 597-residue protein sequence, read N- to C-terminus: Arginine--tRNA ligase (597 aa).

The 'HIGH' region motif lies at P125 to H135.

The protein belongs to the class-I aminoacyl-tRNA synthetase family. Monomer.

It localises to the cytoplasm. It catalyses the reaction tRNA(Arg) + L-arginine + ATP = L-arginyl-tRNA(Arg) + AMP + diphosphate. This Bacteroides fragilis (strain ATCC 25285 / DSM 2151 / CCUG 4856 / JCM 11019 / LMG 10263 / NCTC 9343 / Onslow / VPI 2553 / EN-2) protein is Arginine--tRNA ligase.